The sequence spans 360 residues: Glutamine synthetase (360 aa).

The GS beta-grasp domain maps to 26-105; sequence IMAEYIWIDA…VLSECWNADG (80 aa). Positions 112-360 constitute a GS catalytic domain; it reads YRHECAKLME…METIYGSVDN (249 aa).

It belongs to the glutamine synthetase family. As to quaternary structure, homooctamer.

Its subcellular location is the cytoplasm. The catalysed reaction is L-glutamate + NH4(+) + ATP = L-glutamine + ADP + phosphate + H(+). This Colletotrichum gloeosporioides (Anthracnose fungus) protein is Glutamine synthetase (GLN1).